The chain runs to 333 residues: MFRAAAPGQLRRAASLLRFQSTLVIAEHANDSLAPITLNTITAATRLGGEVSCLVAGTKCDKVAQDLCKVAGIAKVLVAQHDVYKGLLPEELTPLILATQKQFNYTHICAGASAFGKNLLPRVAAKLEVAPISDIIAIKSPDTFVRTIYAGNALCTVKCDEKVKVFSVRGTSFDAAATSGGSASSEKASSTSPVEISEWLDQKLTKSDRPELTGAKVVVSGGRGLKSGENFKLLYDLADQLHAAVGASRAAVDAGFVPNDMQVGQTGKIVAPELYIAVGISGAIQHLAGMKDSKTIVAINKDPEAPIFQVADYGIVADLFKVVPEMTEILKKK.

The N-terminal 19 residues, 1 to 19, are a transit peptide targeting the mitochondrion; it reads MFRAAAPGQLRRAASLLRF. Residues 20 to 204 are domain I; the sequence is QSTLVIAEHA…EISEWLDQKL (185 aa). Lys-59 is modified (N6-acetyllysine; alternate). Lys-59 is modified (N6-succinyllysine; alternate). Lys-62 bears the N6-acetyllysine mark. The residue at position 69 (Lys-69) is an N6-acetyllysine; alternate. Lys-69 carries the N6-succinyllysine; alternate modification. Lys-75 bears the N6-acetyllysine mark. Lys-85 is modified (N6-acetyllysine; alternate). Residue Lys-85 is modified to N6-succinyllysine; alternate. At Thr-93 the chain carries Phosphothreonine. N6-acetyllysine occurs at positions 101 and 139. Phosphoserine is present on Ser-140. N6-acetyllysine; alternate is present on Lys-158. N6-succinyllysine; alternate is present on Lys-158. Lys-164 carries the post-translational modification N6-acetyllysine. Lys-187 carries the post-translational modification N6-succinyllysine. The residue at position 203 (Lys-203) is an N6-acetyllysine; alternate. Lys-203 is subject to N6-succinyllysine; alternate. Residues 205 to 333 are domain II; it reads TKSDRPELTG…PEMTEILKKK (129 aa). Lys-216 carries the post-translational modification N6-succinyllysine. Position 223 (Arg-223) interacts with FAD. Lys-226 and Lys-232 each carry N6-acetyllysine; alternate. N6-succinyllysine; alternate is present on residues Lys-226 and Lys-232. Residues Ser-248, 263 to 266, 281 to 286, and Asn-300 each bind FAD; these read VGQT and SGAIQH. Lys-301 is subject to N6-succinyllysine. 318 to 319 provides a ligand contact to FAD; the sequence is DL.

This sequence belongs to the ETF alpha-subunit/FixB family. Heterodimer composed of ETFA and ETFB. Identified in a complex that contains ETFA, ETFB and ETFRF1. Interaction with ETFRF1 promotes dissociation of the bound FAD and loss of electron transfer activity. Interacts with TASOR. It depends on FAD as a cofactor. Post-translationally, the N-terminus is blocked.

Its subcellular location is the mitochondrion matrix. In terms of biological role, heterodimeric electron transfer flavoprotein that accepts electrons from several mitochondrial dehydrogenases, including acyl-CoA dehydrogenases, glutaryl-CoA and sarcosine dehydrogenase. It transfers the electrons to the main mitochondrial respiratory chain via ETF-ubiquinone oxidoreductase (ETF dehydrogenase). Required for normal mitochondrial fatty acid oxidation and normal amino acid metabolism. This Homo sapiens (Human) protein is Electron transfer flavoprotein subunit alpha, mitochondrial (ETFA).